The sequence spans 249 residues: MGKLTLGHRGEASEPDFFRGVLGELVLTFLFVFIGVGAAMTDGATTKGSTAGGDLTAVALGQALVVAVIATAGFHISGGHVNPAVTLSLAVGGHVTLFRSSLYIAAQMLASSAACFLLRWLTGGLATPVHALAEGVGPLQGVVAEAVFTFSLLFVIYATILDPRKLLPGAGPLLTGLLVGANSVAGAALSGASMNPARSFGPAVASGVWTHHWVYWVGPLAGGPLAVLVYECCFMAAAPTHDLLPQQDP.

The next 2 helical transmembrane spans lie at 20 to 40 and 56 to 76; these read GVLG…GAAM and TAVA…GFHI. The NPA 1 motif lies at 82–84; it reads NPA. 3 helical membrane-spanning segments follow: residues 100-122, 141-161, and 169-189; these read SSLY…RWLT, GVVA…ATIL, and GAGP…GAAL. Positions 195 to 197 match the NPA 2 motif; the sequence is NPA. Residues 214–234 form a helical membrane-spanning segment; sequence VYWVGPLAGGPLAVLVYECCF.

Belongs to the MIP/aquaporin (TC 1.A.8) family. TIP (TC 1.A.8.10) subfamily.

Its subcellular location is the vacuole membrane. Functionally, aquaporins facilitate the transport of water and small neutral solutes across cell membranes. In Zea mays (Maize), this protein is Aquaporin TIP4-3 (TIP4-3).